Consider the following 814-residue polypeptide: MGLPALEFSDCCLDSPHFRETLKSHEAELDKTNKFIKELIKDGKSLISALKNLSSAKRKFADSLNEFKFQCIGDAETDDEMCIARSLQEFATVLRNLEDERIRMIENASEVLITPLEKFRKEQIGAAKEAKKKYDKETEKYCGILEKHLNLSSKKKESQLQEADSQVDLVRQHFYEVSLEYVFKVQEVQERKMFEFVEPLLAFLQGLFTFYHHGYELAKDFGDFKTQLTISIQNTRNRFEGTRSEVESLMKKMKENPLEHKTISPYTMEGYLYVQEKRHFGTSWVKHYCTYQRDSKQITMVPFDQKSGGKGGEDESVILKSCTRRKTDSIEKRFCFDVEAVDRPGVITMQALSEEDRRLWMEAMDGREPVYNSNKDSQSEGTAQLDSIGFSIIRKCIHAVETRGINEQGLYRIVGVNSRVQKLLSVLMDPKTASETETDICAEWEIKTITSALKTYLRMLPGPLMMYQFQRSFIKAAKLENQESRVSEIHSLVHRLPEKNRQMLQLLMNHLANVANNHKQNLMTVANLGVVFGPTLLRPQEETVAAIMDIKFQNIVIEILIENHEKIFNTVPDMPLTNAQLHLSRKKSSDSKPPSCSERPLTLFHTVQSTEKQEQRNSIINSSLESVSSNPNSILNSSSSLQPNMNSSDPDLAVVKPTRPNSLPPNPSPTSPLSPSWPMFSAPSSPMPTSSTSSDSSPVRSVAGFVWFSVAAVVLSLARSSLHAVFSLLVNFVPCHPNLHLLFDRPEEAVHEDSSTPFRKAKALYACKAEHDSELSFTAGTVFDNVHPSQEPGWLEGTLNGKTGLIPENYVEFL.

Residues 7–262 (EFSDCCLDSP…MKENPLEHKT (256 aa)) enclose the BAR domain. Residues 265 to 369 (PYTMEGYLYV…WMEAMDGREP (105 aa)) enclose the PH domain. A Rho-GAP domain is found at 383-568 (AQLDSIGFSI…ILIENHEKIF (186 aa)). Over residues 624-648 (LESVSSNPNSILNSSSSLQPNMNSS) the composition is skewed to low complexity. The segment at 624-696 (LESVSSNPNS…MPTSSTSSDS (73 aa)) is disordered. Residues 662–672 (SLPPNPSPTSP) show a composition bias toward pro residues. Phosphoserine is present on serine 668. Position 670 is a phosphothreonine (threonine 670). Serine 671 carries the post-translational modification Phosphoserine. Over residues 673–696 (LSPSWPMFSAPSSPMPTSSTSSDS) the composition is skewed to low complexity. In terms of domain architecture, SH3 spans 756-814 (TPFRKAKALYACKAEHDSELSFTAGTVFDNVHPSQEPGWLEGTLNGKTGLIPENYVEFL).

Interacts with NYAP1, NYAP2 and MYO16. Interacts with MICAL1 and WDR44. Binds to the C-terminus of PTK2/FAK1. In terms of assembly, (Microbial infection) Interacts with human parainfluenza virus type 2 proteins P and V. Phosphorylated in a PINK1-dependent fashion promoting retrograde mitochondrial trafficking and clustering.

It is found in the endosome membrane. Its subcellular location is the cytoplasm. It localises to the cell junction. The protein localises to the focal adhesion. The protein resides in the cytoskeleton. Functionally, GTPase-activating protein for RHOA and CDC42. Facilitates mitochondrial quality control by promoting Parkin-mediated recruitment of autophagosomes to damaged mitochondria. Negatively regulates the growth of human parainfluenza virus type 2 by inhibiting hPIV-2-mediated RHOA activation via interaction with two of its viral proteins P and V. Associates with MICAL1 on the endosomal membrane to promote Rab8-Rab10-dependent tubule extension. After dissociation of MICAL1, recruits WDR44 which connects the endoplasmic reticulum (ER) with the endosomal tubule, thereby participating in the export of a subset of neosynthesized proteins. This Homo sapiens (Human) protein is Rho GTPase-activating protein 26 (ARHGAP26).